Consider the following 68-residue polypeptide: uncharacterized protein (68 aa).

Positions 1-68 (METIIRRFSP…GNSKNIKTKK (68 aa)) are disordered. Positions 9 to 34 (SPKEKEKEKEKEEKDEKSKDKKEPIK) are enriched in basic and acidic residues. Residues 42 to 51 (DEEEEEDEQE) are compositionally biased toward acidic residues.

This is an uncharacterized protein from Dictyostelium discoideum (Social amoeba).